The chain runs to 30 residues: Ornithine carbamoyltransferase, catabolic (30 aa).

The protein belongs to the aspartate/ornithine carbamoyltransferase superfamily. OTCase family.

Its subcellular location is the cytoplasm. It catalyses the reaction carbamoyl phosphate + L-ornithine = L-citrulline + phosphate + H(+). It participates in amino-acid degradation; L-arginine degradation via ADI pathway; carbamoyl phosphate from L-arginine: step 2/2. The polypeptide is Ornithine carbamoyltransferase, catabolic (arcB) (Aeromonas caviae (Aeromonas punctata)).